A 133-amino-acid chain; its full sequence is Histone H2A.Z (133 aa).

The segment covering 1 to 11 (MSGKGKVHGGK) has biased composition (basic residues). The disordered stretch occupies residues 1 to 30 (MSGKGKVHGGKGKSSEIAKSSTSHSARAGL). Ser2 is modified (N-acetylserine). 3 positions are modified to N6-acetyllysine: Lys4, Lys11, and Lys13.

Belongs to the histone H2A family. As to quaternary structure, the nucleosome is a histone octamer containing two molecules each of H2A, H2B, H3 and H4 assembled in one H3-H4 heterotetramer and two H2A-H2B heterodimers. The octamer wraps approximately 147 bp of DNA. H2A or its variant H2A.Z forms a heterodimer with H2B. H2A.Z associates with the VPS72/SWC2 subunit of the SWR1 chromatin remodeling complex. Also interacts with RBP1/DNA-directed RNA polymerase II largest subunit. Acetylated once deposited into chromatin.

It localises to the nucleus. The protein localises to the chromosome. Its function is as follows. Variant histone H2A which can replace H2A in some nucleosomes. Nucleosomes wrap and compact DNA into chromatin, limiting DNA accessibility to the cellular machineries which require DNA as a template. Histones thereby play a central role in transcription regulation, DNA repair, DNA replication and chromosomal stability. DNA accessibility is regulated via a complex set of post-translational modifications of histones, also called histone code, and nucleosome remodeling. This variant is enriched at promoters, it may keep them in a repressed state until the appropriate activation signal is received. Near telomeres, it may counteract gene silencing caused by the spread of heterochromatin proteins. Required for the RNA polymerase II and SPT15/TBP recruitment to the target genes. Involved in chromosome stability. The protein is Histone H2A.Z (HTZ1) of Lodderomyces elongisporus (strain ATCC 11503 / CBS 2605 / JCM 1781 / NBRC 1676 / NRRL YB-4239) (Yeast).